The chain runs to 399 residues: Tryptophan synthase beta chain (399 aa).

Lys-92 is subject to N6-(pyridoxal phosphate)lysine.

Belongs to the TrpB family. Tetramer of two alpha and two beta chains. The cofactor is pyridoxal 5'-phosphate.

It catalyses the reaction (1S,2R)-1-C-(indol-3-yl)glycerol 3-phosphate + L-serine = D-glyceraldehyde 3-phosphate + L-tryptophan + H2O. The protein operates within amino-acid biosynthesis; L-tryptophan biosynthesis; L-tryptophan from chorismate: step 5/5. The beta subunit is responsible for the synthesis of L-tryptophan from indole and L-serine. The polypeptide is Tryptophan synthase beta chain (Bordetella petrii (strain ATCC BAA-461 / DSM 12804 / CCUG 43448)).